A 354-amino-acid chain; its full sequence is L-lactate dehydrogenase (354 aa).

NAD(+) contacts are provided by residues 73 to 78 (DAVPDK) and Arg-120. The substrate site is built by Arg-127, Asn-159, and Arg-190. Asn-159 contacts NAD(+). His-214 acts as the Proton acceptor in catalysis. Substrate is bound at residue Thr-269. The tract at residues 302–332 (HGIPDGTTSSSACPPRRPRRRPGRREMELTE) is disordered.

Belongs to the LDH/MDH superfamily. LDH family. In terms of assembly, homotetramer.

The enzyme catalyses (S)-lactate + NAD(+) = pyruvate + NADH + H(+). The protein operates within fermentation; pyruvate fermentation to lactate; (S)-lactate from pyruvate: step 1/1. The chain is L-lactate dehydrogenase from Zea mays (Maize).